Reading from the N-terminus, the 783-residue chain is Endonuclease MutS2 (783 aa).

Residue 328 to 335 coordinates ATP; it reads GPNTGGKT. A Smr domain is found at 708-783; that stretch reads LDLRGKRYEE…GSGCTIATLG (76 aa).

Belongs to the DNA mismatch repair MutS family. MutS2 subfamily. Homodimer. Binds to stalled ribosomes, contacting rRNA.

Its function is as follows. Endonuclease that is involved in the suppression of homologous recombination and thus may have a key role in the control of bacterial genetic diversity. Acts as a ribosome collision sensor, splitting the ribosome into its 2 subunits. Detects stalled/collided 70S ribosomes which it binds and splits by an ATP-hydrolysis driven conformational change. Acts upstream of the ribosome quality control system (RQC), a ribosome-associated complex that mediates the extraction of incompletely synthesized nascent chains from stalled ribosomes and their subsequent degradation. Probably generates substrates for RQC. The sequence is that of Endonuclease MutS2 from Streptococcus thermophilus (strain ATCC BAA-491 / LMD-9).